Reading from the N-terminus, the 291-residue chain is Oligopeptide transport system permease protein OppC (291 aa).

The next 6 helical transmembrane spans lie at 22 to 42 (VASL…PPLL), 85 to 105 (MLIG…VGAI), 116 to 136 (TLMW…IAIV), 142 to 162 (NSAN…MISS), 209 to 229 (ALNV…GFGI), and 247 to 267 (ATAF…ILVC). The 192-residue stretch at 81-272 (MQKSMLIGVC…LILVCANLTG (192 aa)) folds into the ABC transmembrane type-1 domain.

This sequence belongs to the binding-protein-dependent transport system permease family. OppBC subfamily. As to quaternary structure, the complex is composed of an ATP-binding protein (OppD), two transmembrane proteins (OppB and OppC) and a solute-binding protein (OppA).

It is found in the cell inner membrane. In terms of biological role, part of the ABC transporter complex OppABCD involved in the uptake of oligopeptides. Responsible for the translocation of the substrate across the membrane. This Mycobacterium bovis (strain ATCC BAA-935 / AF2122/97) protein is Oligopeptide transport system permease protein OppC.